Here is a 227-residue protein sequence, read N- to C-terminus: Nitrobenzene nitroreductase (227 aa).

14–18 serves as a coordination point for FMN; it reads RRAKR. 2 residues coordinate NADP(+): S44 and I109. FMN-binding positions include 172–173 and K215; that span reads VF.

The protein belongs to the nitroreductase family. In terms of assembly, monomer. FMN serves as cofactor.

The catalysed reaction is N-phenylhydroxylamine + 2 NADP(+) + H2O = nitrobenzene + 2 NADPH + 2 H(+). It functions in the pathway xenobiotic degradation; nitrobenzene degradation. Its activity is regulated as follows. Inhibited by dicumarol, p-hydroxymercuribenzoate and salicyl hydroxamate. Its function is as follows. Involved in the biodegradation of nitroaromatic compounds. Catalyzes the two-electron reduction of nitrobenzene (NB) to produce a nitrosobenzene (NOB) intermediate, which is immediately reduced to hydroxylaminobenzene (HAB) by a second two-electron transfer. Also active on menadione and nitrofurazone. Replacing NADPH with NADH results in a 4-fold decrease in the reaction rate. This chain is Nitrobenzene nitroreductase, found in Ectopseudomonas oleovorans (Pseudomonas oleovorans).